The primary structure comprises 518 residues: Stage V sporulation protein B (518 aa).

Helical transmembrane passes span 6 to 26 (FLKG…LGFV), 45 to 65 (MAAP…PVAI), 91 to 111 (ITGV…PVMA), 120 to 140 (TLYP…SSVL), 165 to 185 (ISLV…YAAA), 186 to 206 (GAML…FVCF), 250 to 270 (WFFE…ATVA), 281 to 301 (FAMT…TALV), 326 to 346 (LCLL…DELM), 348 to 368 (VMYG…FFLL), 387 to 407 (AAMM…FVLA), 411 to 431 (SLGI…VTLL), 446 to 466 (IKEY…SSAI), and 478 to 498 (VNLA…LLVF).

It belongs to the polysaccharide synthase family.

It localises to the cell membrane. Involved, directly or indirectly, in spore cortex biosynthesis. Affects only indirectly the expression of late sporulation genes. This is Stage V sporulation protein B (spoVB) from Bacillus subtilis (strain 168).